Here is a 635-residue protein sequence, read N- to C-terminus: 1-deoxy-D-xylulose-5-phosphate synthase (635 aa).

Thiamine diphosphate contacts are provided by residues histidine 74 and 115–117 (GHA). Residue aspartate 146 coordinates Mg(2+). Thiamine diphosphate-binding positions include 147–148 (GA), asparagine 175, tyrosine 285, and glutamate 367. Asparagine 175 serves as a coordination point for Mg(2+).

Belongs to the transketolase family. DXPS subfamily. In terms of assembly, homodimer. It depends on Mg(2+) as a cofactor. Thiamine diphosphate is required as a cofactor.

It carries out the reaction D-glyceraldehyde 3-phosphate + pyruvate + H(+) = 1-deoxy-D-xylulose 5-phosphate + CO2. It functions in the pathway metabolic intermediate biosynthesis; 1-deoxy-D-xylulose 5-phosphate biosynthesis; 1-deoxy-D-xylulose 5-phosphate from D-glyceraldehyde 3-phosphate and pyruvate: step 1/1. Functionally, catalyzes the acyloin condensation reaction between C atoms 2 and 3 of pyruvate and glyceraldehyde 3-phosphate to yield 1-deoxy-D-xylulose-5-phosphate (DXP). The protein is 1-deoxy-D-xylulose-5-phosphate synthase of Anaeromyxobacter sp. (strain Fw109-5).